The following is a 360-amino-acid chain: MTATLQRRESASLWERFCSWITSTENRLYIGWFGVLMIPTLLTATSVFIIAFVAAPPVDIDGIREPVAGSLLYGNNIISGAVIPSSAAIGIHFYPIWEAASLDEWLYNGGPYQLVVLHFLTGVACYIGREWELSYRLGMRPWISVAFTAPVAAAAAVFLVYPIGQGSFSDGMPLGISGTFNFMLVFQAEHNILMHPFHQLGVAGVFGGSLFSAMHGSLVTSSLIRETSENESANYAYKFGQEEETYNIVAAHGYFGRLIFQYASFNNSRSLHFFLGLWPVVGIWLTALSVSTMAFNLNGFNFNQSVVDSQGRVINTWADIINRANLGMEVMHERNAHNFPLDLASGESLPVALTAPAVNG.

3 consecutive transmembrane segments (helical) span residues 29 to 46 (YIGW…TATS), 118 to 133 (HFLT…EWEL), and 142 to 156 (WISV…AAAA). Residue histidine 118 participates in chlorophyll a binding. Tyrosine 126 provides a ligand contact to pheophytin a. Aspartate 170 and glutamate 189 together coordinate [CaMn4O5] cluster. Residues 197–218 (FHQLGVAGVFGGSLFSAMHGSL) traverse the membrane as a helical segment. Histidine 198 provides a ligand contact to chlorophyll a. Residues histidine 215 and 264 to 265 (SF) contribute to the a quinone site. Histidine 215 provides a ligand contact to Fe cation. Histidine 272 contacts Fe cation. A helical transmembrane segment spans residues 274–288 (FLGLWPVVGIWLTAL). Histidine 332, glutamate 333, aspartate 342, and alanine 344 together coordinate [CaMn4O5] cluster. A propeptide spanning residues 345–360 (SGESLPVALTAPAVNG) is cleaved from the precursor.

This sequence belongs to the reaction center PufL/M/PsbA/D family. As to quaternary structure, PSII is composed of 1 copy each of membrane proteins PsbA, PsbB, PsbC, PsbD, PsbE, PsbF, PsbH, PsbI, PsbJ, PsbK, PsbL, PsbM, PsbT, PsbX, PsbY, PsbZ, Psb30/Ycf12, at least 3 peripheral proteins of the oxygen-evolving complex and a large number of cofactors. It forms dimeric complexes. The cofactor is The D1/D2 heterodimer binds P680, chlorophylls that are the primary electron donor of PSII, and subsequent electron acceptors. It shares a non-heme iron and each subunit binds pheophytin, quinone, additional chlorophylls, carotenoids and lipids. D1 provides most of the ligands for the Mn4-Ca-O5 cluster of the oxygen-evolving complex (OEC). There is also a Cl(-1) ion associated with D1 and D2, which is required for oxygen evolution. The PSII complex binds additional chlorophylls, carotenoids and specific lipids.. Tyr-161 forms a radical intermediate that is referred to as redox-active TyrZ, YZ or Y-Z. In terms of processing, C-terminally processed by CTPA; processing is essential to allow assembly of the oxygen-evolving complex and thus photosynthetic growth.

It is found in the plastid. It localises to the chloroplast thylakoid membrane. It catalyses the reaction 2 a plastoquinone + 4 hnu + 2 H2O = 2 a plastoquinol + O2. Photosystem II (PSII) is a light-driven water:plastoquinone oxidoreductase that uses light energy to abstract electrons from H(2)O, generating O(2) and a proton gradient subsequently used for ATP formation. It consists of a core antenna complex that captures photons, and an electron transfer chain that converts photonic excitation into a charge separation. The D1/D2 (PsbA/PsbD) reaction center heterodimer binds P680, the primary electron donor of PSII as well as several subsequent electron acceptors. The polypeptide is Photosystem II protein D1 (Porphyra purpurea (Red seaweed)).